Reading from the N-terminus, the 797-residue chain is Outer membrane protein assembly factor BamA (797 aa).

Positions 1–19 (MKKLLIASLLFGTTTTVFA) are cleaved as a signal peptide. 5 consecutive POTRA domains span residues 22–89 (FVAK…VVAK), 90–170 (SIIS…INED), 173–259 (AKLA…VNEG), 262–341 (YDLR…VDAG), and 344–418 (LTVR…VKER).

It belongs to the BamA family. As to quaternary structure, part of the Bam complex.

It localises to the cell outer membrane. Part of the outer membrane protein assembly complex, which is involved in assembly and insertion of beta-barrel proteins into the outer membrane. This is Outer membrane protein assembly factor BamA from Haemophilus influenzae.